A 625-amino-acid chain; its full sequence is Probable potassium transport system protein Kup 2 (625 aa).

Transmembrane regions (helical) follow at residues 15 to 35 (LSFAALGVVFGDIGTSPLYAF), 52 to 72 (ILSLIFWSLIIIVSIKYLVIV), 98 to 118 (GGWLLFITLVGIGLIIGDGML), 134 to 154 (LSPNLAKYVLPVTLIILFFLF), 164 to 184 (IGVYFAPVMLVWFITIGILGF), 212 to 232 (LALFILGGVFLVMTGGEALFA), 246 to 266 (WFAVALPALLLCYFGQGALVL), 284 to 304 (FLPVMIILATLATIIASQAII), 336 to 356 (VYLPLINFILALGTCSLVVIF), 365 to 385 (AYGIAVNLDMLITTVLVGIIA), 394 to 414 (FKILIFLLILIIELAFFAGNI), and 417 to 437 (LLTGGWIPILIAFLGFVVMYT).

It belongs to the HAK/KUP transporter (TC 2.A.72) family.

It is found in the cell inner membrane. It carries out the reaction K(+)(in) + H(+)(in) = K(+)(out) + H(+)(out). Transport of potassium into the cell. Likely operates as a K(+):H(+) symporter. This Legionella pneumophila (strain Corby) protein is Probable potassium transport system protein Kup 2.